The sequence spans 76 residues: Centromere protein W (76 aa).

This sequence belongs to the CENP-W/WIP1 family. Heterodimer with CENPT; this dimer coassembles with CENPS-CENPX heterodimers at centromeres to form the tetrameric CENP-T-W-S-X complex, which is a subcomplex of the large constitutive centromere-associated network (CCAN, also known as the interphase centromere complex or ICEN). Interacts with NPM1.

It is found in the nucleus. It localises to the chromosome. The protein resides in the centromere. Its subcellular location is the kinetochore. Its function is as follows. Component of the CENPA-NAC (nucleosome-associated) complex, a complex that plays a central role in assembly of kinetochore proteins, mitotic progression and chromosome segregation. The CENPA-NAC complex recruits the CENPA-CAD (nucleosome distal) complex and may be involved in incorporation of newly synthesized CENPA into centromeres. Part of a nucleosome-associated complex that binds specifically to histone H3-containing nucleosomes at the centromere, as opposed to nucleosomes containing CENPA. Component of the heterotetrameric CENP-T-W-S-X complex that binds and supercoils DNA, and plays an important role in kinetochore assembly. CENPW has a fundamental role in kinetochore assembly and function. It is one of the inner kinetochore proteins, with most further proteins binding downstream. Required for normal chromosome organization and normal progress through mitosis. The protein is Centromere protein W (CENPW) of Gallus gallus (Chicken).